We begin with the raw amino-acid sequence, 276 residues long: Palmitoyltransferase ZDHHC22 (276 aa).

At methionine 1–threonine 9 the chain is on the cytoplasmic side. Residues isoleucine 10–phenylalanine 30 traverse the membrane as a helical segment. The Lumenal portion of the chain corresponds to threonine 31 to alanine 45. The helical transmembrane segment at methionine 46–methionine 66 threads the bilayer. The Cytoplasmic segment spans residues threonine 67–tyrosine 131. Positions histidine 101–isoleucine 137 constitute a DHHC domain. Residue cysteine 117 is the S-palmitoyl cysteine intermediate of the active site. A helical membrane pass occupies residues phenylalanine 132–alanine 152. Residues tyrosine 153–proline 165 lie on the Lumenal side of the membrane. A helical membrane pass occupies residues leucine 166 to glycine 186. Residues leucine 187–glutamine 188 lie on the Cytoplasmic side of the membrane. The helical transmembrane segment at phenylalanine 189 to cysteine 209 threads the bilayer. Topologically, residues cysteine 210–aspartate 276 are lumenal.

Belongs to the DHHC palmitoyltransferase family.

Its subcellular location is the endoplasmic reticulum membrane. The protein resides in the golgi apparatus membrane. It carries out the reaction L-cysteinyl-[protein] + hexadecanoyl-CoA = S-hexadecanoyl-L-cysteinyl-[protein] + CoA. Palmitoyltransferase that could catalyze the addition of palmitate onto various protein substrates and be involved in a variety of cellular processes. This is Palmitoyltransferase ZDHHC22 (zdhhc22) from Danio rerio (Zebrafish).